The following is a 131-amino-acid chain: Large ribosomal subunit protein bL12 (131 aa).

This sequence belongs to the bacterial ribosomal protein bL12 family. As to quaternary structure, homodimer. Part of the ribosomal stalk of the 50S ribosomal subunit. Forms a multimeric L10(L12)X complex, where L10 forms an elongated spine to which 2 to 4 L12 dimers bind in a sequential fashion. Binds GTP-bound translation factors.

In terms of biological role, forms part of the ribosomal stalk which helps the ribosome interact with GTP-bound translation factors. Is thus essential for accurate translation. The polypeptide is Large ribosomal subunit protein bL12 (Prochlorococcus marinus (strain MIT 9515)).